Here is a 318-residue protein sequence, read N- to C-terminus: BES1/BZR1 homolog protein 2 (318 aa).

Residues 1-13 (MAAGGGGGGGGSS) are compositionally biased toward gly residues. Disordered regions lie at residues 1–34 (MAAGGGGGGGGSSSGRTPTWKERENNKKRERRRR), 84–133 (FKPP…PSPS), 166–195 (NSAPVTPPLSSPTSRGSKRKLTSEQLPNGG), and 209–231 (APSSPTRRAGHQTPPTIPECDES). Residues 16-97 (RTPTWKEREN…ASDISGTPTN (82 aa)) are required for DNA-binding. The span at 91 to 101 (ISGTPTNFSTN) shows a compositional bias: polar residues. The span at 102–133 (SSIQPSPQSSAFPSPAPSYHGSPVSSSFPSPS) shows a compositional bias: low complexity.

Belongs to the BZR/LAT61 family. Phosphorylated. Phosphorylation increases protein degradation.

This Arabidopsis thaliana (Mouse-ear cress) protein is BES1/BZR1 homolog protein 2 (BEH2).